Here is an 809-residue protein sequence, read N- to C-terminus: TPR repeat-containing protein TP_0920 (809 aa).

A disordered region spans residues 103 to 125 (PGEARALPNSEQPEVPASLDSTS). TPR repeat units lie at residues 315–348 (LREY…DPHC), 383–416 (AFLS…DPHQ), 418–450 (LFAL…FLAQ), 471–504 (TEVR…GSAD), 513–550 (LLLR…APDC), 552–582 (LYHF…DPDN), 583–616 (GWLH…LPHE), 656–689 (GQAF…EPQN), and 723–756 (AHVY…WPQC).

This is TPR repeat-containing protein TP_0920 from Treponema pallidum (strain Nichols).